Consider the following 142-residue polypeptide: Large ribosomal subunit protein uL13 (142 aa).

The protein belongs to the universal ribosomal protein uL13 family. In terms of assembly, part of the 50S ribosomal subunit.

This protein is one of the early assembly proteins of the 50S ribosomal subunit, although it is not seen to bind rRNA by itself. It is important during the early stages of 50S assembly. This chain is Large ribosomal subunit protein uL13, found in Syntrophobacter fumaroxidans (strain DSM 10017 / MPOB).